A 60-amino-acid chain; its full sequence is Large ribosomal subunit protein bL32 (60 aa).

Basic residues predominate over residues Met1–Gln23. Residues Met1–Glu60 form a disordered region.

This sequence belongs to the bacterial ribosomal protein bL32 family.

The polypeptide is Large ribosomal subunit protein bL32 (Microcystis aeruginosa (strain NIES-843 / IAM M-2473)).